We begin with the raw amino-acid sequence, 228 residues long: Aquaporin Z (228 aa).

2 consecutive transmembrane segments (helical) span residues 1–21 (MLNK…GGCG) and 23–43 (AILA…ALAF). The short motif at 63–65 (NPA) is the NPA 1 element. The next 3 helical transmembrane spans lie at 82–102 (IPYW…LYVI), 129–149 (MMAG…IILG), and 154–174 (LAPA…IHLV). Positions 184-186 (NPA) match the NPA 2 motif. Residues 205 to 225 (LFWVAPLVGAVIGAIIWKGLL) traverse the membrane as a helical segment.

The protein belongs to the MIP/aquaporin (TC 1.A.8) family. As to quaternary structure, homotetramer.

Its subcellular location is the cell inner membrane. The enzyme catalyses H2O(in) = H2O(out). In terms of biological role, channel that permits osmotically driven movement of water in both directions. It is involved in the osmoregulation and in the maintenance of cell turgor during volume expansion in rapidly growing cells. It mediates rapid entry or exit of water in response to abrupt changes in osmolarity. The chain is Aquaporin Z from Brucella abortus biovar 1 (strain 9-941).